Reading from the N-terminus, the 296-residue chain is uncharacterized protein (296 aa).

10 helical membrane passes run 8–28 (LFVLIAAFFWGTTGTVQALAP), 34–54 (LAFGAFRLLIGGSAMLLAVWI), 63–83 (WAWPLVFLAAVCMACYQPLFF), 89–109 (TGIAVGTVIAIGSAPIIAGTL), 121–141 (SWWIATVLALAGCWLLFSDSS), 147–167 (VAGVLMALGAGASFAGYTLIS), 183–203 (VFMISAILLTPLLWQLDISWI), 208–228 (GLGTSLYIGLIATCAAYFLFA), 238–258 (AAVTLSLAEPLTASLLGVFFI), and 261–281 (MLSPSSWLGIALMMLGLLVIS). 2 consecutive EamA domains span residues 15–138 (FFWG…LLFS) and 158–282 (ASFA…VISA).

Belongs to the EamA transporter family.

Its subcellular location is the cell membrane. This is an uncharacterized protein from Bacillus subtilis (strain 168).